We begin with the raw amino-acid sequence, 192 residues long: Fe/S biogenesis protein NfuA (192 aa).

The [4Fe-4S] cluster site is built by Cys-150 and Cys-153.

It belongs to the NfuA family. In terms of assembly, homodimer. The cofactor is [4Fe-4S] cluster.

Functionally, involved in iron-sulfur cluster biogenesis. Binds a 4Fe-4S cluster, can transfer this cluster to apoproteins, and thereby intervenes in the maturation of Fe/S proteins. Could also act as a scaffold/chaperone for damaged Fe/S proteins. The polypeptide is Fe/S biogenesis protein NfuA (Buchnera aphidicola subsp. Acyrthosiphon pisum (strain APS) (Acyrthosiphon pisum symbiotic bacterium)).